The following is a 104-amino-acid chain: Cell division topological specificity factor (104 aa).

It belongs to the MinE family.

Functionally, prevents the cell division inhibition by proteins MinC and MinD at internal division sites while permitting inhibition at polar sites. This ensures cell division at the proper site by restricting the formation of a division septum at the midpoint of the long axis of the cell. The chain is Cell division topological specificity factor from Sorangium cellulosum (strain So ce56) (Polyangium cellulosum (strain So ce56)).